The sequence spans 115 residues: Probable 4-amino-4-deoxy-L-arabinose-phosphoundecaprenol flippase subunit ArnE (115 aa).

A run of 3 helical transmembrane segments spans residues 42–62 (PWPW…LLLL), 65–85 (VEVG…TLAA), and 93–112 (VDRR…ALLG). Residues 46–113 (LALLALGLGL…IVAGVALLGR (68 aa)) enclose the EamA domain.

This sequence belongs to the ArnE family. As to quaternary structure, heterodimer of ArnE and ArnF.

The protein resides in the cell inner membrane. It participates in bacterial outer membrane biogenesis; lipopolysaccharide biosynthesis. Functionally, translocates 4-amino-4-deoxy-L-arabinose-phosphoundecaprenol (alpha-L-Ara4N-phosphoundecaprenol) from the cytoplasmic to the periplasmic side of the inner membrane. The chain is Probable 4-amino-4-deoxy-L-arabinose-phosphoundecaprenol flippase subunit ArnE from Pseudomonas aeruginosa (strain LESB58).